The sequence spans 116 residues: S-adenosylmethionine decarboxylase proenzyme (116 aa).

The active-site Schiff-base intermediate with substrate; via pyruvic acid is S62. S62 is modified (pyruvic acid (Ser); by autocatalysis). The active-site Proton acceptor; for processing activity is the H67. C82 functions as the Proton donor; for catalytic activity in the catalytic mechanism.

Belongs to the prokaryotic AdoMetDC family. Type 1 subfamily. Heterotetramer of two alpha and two beta chains arranged as a dimer of alpha/beta heterodimers. It depends on pyruvate as a cofactor. Post-translationally, is synthesized initially as an inactive proenzyme. Formation of the active enzyme involves a self-maturation process in which the active site pyruvoyl group is generated from an internal serine residue via an autocatalytic post-translational modification. Two non-identical subunits are generated from the proenzyme in this reaction, and the pyruvate is formed at the N-terminus of the alpha chain, which is derived from the carboxyl end of the proenzyme. The post-translation cleavage follows an unusual pathway, termed non-hydrolytic serinolysis, in which the side chain hydroxyl group of the serine supplies its oxygen atom to form the C-terminus of the beta chain, while the remainder of the serine residue undergoes an oxidative deamination to produce ammonia and the pyruvoyl group blocking the N-terminus of the alpha chain.

It carries out the reaction S-adenosyl-L-methionine + H(+) = S-adenosyl 3-(methylsulfanyl)propylamine + CO2. It functions in the pathway amine and polyamine biosynthesis; S-adenosylmethioninamine biosynthesis; S-adenosylmethioninamine from S-adenosyl-L-methionine: step 1/1. Its function is as follows. Catalyzes the decarboxylation of S-adenosylmethionine to S-adenosylmethioninamine (dcAdoMet), the propylamine donor required for the synthesis of the polyamines spermine and spermidine from the diamine putrescine. The polypeptide is S-adenosylmethionine decarboxylase proenzyme (Thermomicrobium roseum (strain ATCC 27502 / DSM 5159 / P-2)).